A 1576-amino-acid polypeptide reads, in one-letter code: MDAAKRLELCKEIQENEIEALKAIFMDDFEELKVRNAWNVTNGHVYCIHLCSRSANSKSIAKLDLCIELGRSYPYVKPVIKLQNGENVLNSQIRFLLDKLDTKAKDLLGEEMIFELASIVQDYLNDWQSDLSSQFASLEEERAVQLKHDRERAEVDLQLRLKREKDALFEEEQTLQNKIQDELQRRSYETPQSSSKKKTNSKETTSLETLPTSIYFDCSISVRDCHDSLVTFNRVLPLYTISHSNLSTLTLVKPESKEISLQDCVFLLRTVRISTPYWSTEDGKREIQELEYELESLKVIRHDLLASIYEYQLERETRGYGWRLYVLQEYSPKFTLFSLLQTVLTLDVETVRAFSNNILEGLAELHRLGISHKSLHLDNVVLFHSGHRTFAKLMDFGFTRTLRDMNASHPFNINSQSITNILPEGLYPPEVSESSFAAASRKTDIWCFGLLVLQMLCGAHVLNKFSSLKLIMTHVIPLLPGSYQDLVRRCLMRDSRKRPSAIDLLSSHVIRLGTAVLPPVEQGTFSKSARPSYGGQQDGIIDLLYRKSVSRYETDFEELEFLGRGGFGEVVKVKNRIDGRFYAVKKLVLLSDDKENSRILREVMTLSRLHHEHVVRYYTAWVETEANDTVTEIISSDSESLSQSLNMAVDFRQSSSLPADKLSSLDIHFEDDYNSSADEEDPEASDISFQYSNTSDKEGSSDKDSSIEEASSVKTQENGLNATLYIQMEYCEKLSLQDIIRDKIPVDEMWRLFRQILEALAYIHSRGMMHRDLKPGNIFLDENRNVKLGDFGLATENENYQDNNDKWKNRQSADEDLTTGVGTALYVAPELLSRRNGVRYDAKVDMYSLGIILFEMCMTFSTSMERIRIIDTIRSPSISFPSTFPFSRASHEFKVIHCLLQHDPTKRPSSQELLESEAIPPKVGEEFIQEGLRLLSNPNTPYYLKLLKVLFGQVPDRHKDFTYDFNLSEESGVLSKVSDRGWDSLLACLVRDHVVKVFRRHGAKERESHILFPKSSQYDKDQASVSLLDKNGTLLQLPYDTVLPYARNVARNAVEEEKTYLISDVFREAKGGGRPKAIKEISFDITTNSDNLDWYDAETIKALDEVLTEIPSLTESCILINHADILSSILDYLQVSKDKRRMATHILGQINQRLTLSQVRNQLRIESLVPSTTLDDLSLFDFRENYEEGASKLRKIFGKEMPQKMRTALNYMERVVKLLRALKISHQLYFMPLCVYNFEFYDGGLMFQAINLAEKSELICAGGRYDKLVRFFDPPLMRTARKKHVVGICFALEKLVFSMLRYIRFHNSKQSSKHSPSPTLKSVGPWAPRRVDVLVTSIGKDSILEKCSLLQELWALNIQADIVLRGASSLEEIVTHYRSEGINWVLVVRQKNTQMEHSVKARNILKNEDDEIRFDEVGMWLLGEINERKRNESMLQSKRILDSAQQDVAKFVDTSQSNLDVQLISLKDVNDRKYKWKHKQNAMNKVYDLVQSAIRESSEDAIALAVDCDSEAMEKLRSTTTLDEESWKRLIESCPASQREYMQRLQKKLVTLAEQDKKRVWICSFRTNEIYLYGLK.

Positions 16 to 127 (NEIEALKAIF…SIVQDYLNDW (112 aa)) constitute an RWD domain. Residues 180 to 204 (QDELQRRSYETPQSSSKKKTNSKET) are disordered. Protein kinase domains are found at residues 235 to 511 (VLPL…HVIR) and 556 to 928 (FEEL…EEFI). ATP contacts are provided by residues 562 to 570 (LGRGGFGEV) and Lys585. Positions 673-714 (YNSSADEEDPEASDISFQYSNTSDKEGSSDKDSSIEEASSVK) are disordered. Basic and acidic residues predominate over residues 695–706 (SDKEGSSDKDSS). Catalysis depends on Asp772, which acts as the Proton acceptor.

The protein belongs to the protein kinase superfamily. Ser/Thr protein kinase family. GCN2 subfamily. Homodimer; homodimerization is important for kinase activation by uncharged tRNAs. Interacts (via N-terminal RWD domain) with gcn1 (via N- and C-terminus); this interaction stimulates gcn2 kinase activity in a gcn20-dependent manner in response to amino acid starvation. Interacts (via N-terminus) with the gcn1-gcn20 complex on translating ribosomes in amino acid-starved cells; gcn1 may bind near the ribosomal A-site and promotes the transfer of uncharged tRNAs from the A-site to the tRNA-binding domain in gcn2 for its subsequent kinase activation, and hence allowing fil1 translational activation and derepression of amino acid biosynthetic genes. Post-translationally, autophosphorylated.

The protein localises to the cytoplasm. The enzyme catalyses L-seryl-[protein] + ATP = O-phospho-L-seryl-[protein] + ADP + H(+). It carries out the reaction L-threonyl-[protein] + ATP = O-phospho-L-threonyl-[protein] + ADP + H(+). The integrated stress response (ISR) is activated in response to conditions that promote ribosome collisions: gcn1, which acts as a ribosome collision sensor, activates gcn2. The RQC pathway and the integrated stress response (ISR) antagonize each other: hel2 prevents the activation of gcn2, while gcn2 suppresses RQC activation. Ribosome stalling-induced integrated stress response prefers ribosomes with empty A sites. The kinase activity is stimulated upon binding to uncharged tRNAs. Its function is as follows. Metabolic-stress sensing protein kinase that phosphorylates the alpha subunit of eukaryotic translation initiation factor 2 (eIF-2-alpha/SUI2) on 'Ser-52' in response to low amino acid, carbon, or purine availability. Required for adapatation to nutrient starvation by acting as a key component of the integrated stress response (ISR), by which cells alter their translational and transcriptional output in response to starvation. Converts phosphorylated eIF-2-alpha/SUI2 either to a competitive inhibitor of translation initiation factor eIF-2B, leading to a global protein synthesis repression, and thus to a reduced overall utilization of amino acids, or to a translational initiation activation of specific mRNAs, such as the transcriptional activator GCN4, and hence allowing GCN4-mediated reprogramming of transcription to alleviate nutrient depletion. Binds uncharged tRNAs. The polypeptide is eIF-2-alpha kinase GCN2 (Schizosaccharomyces pombe (strain 972 / ATCC 24843) (Fission yeast)).